Here is a 124-residue protein sequence, read N- to C-terminus: Ragulator complex protein LAMTOR2 homolog (124 aa).

This sequence belongs to the GAMAD family. Part of the Ragulator complex.

Functionally, regulator of the TOR pathway, a signaling cascade that promotes cell growth in response to growth factors, energy levels, and amino acids. May activate the TOR signaling cascade in response to amino acids. The chain is Ragulator complex protein LAMTOR2 homolog from Caenorhabditis elegans.